The sequence spans 201 residues: Recombination protein RecR (201 aa).

Residues Cys57–Cys72 form a C4-type zinc finger. Residues Thr80–Pro176 form the Toprim domain.

The protein belongs to the RecR family.

Functionally, may play a role in DNA repair. It seems to be involved in an RecBC-independent recombinational process of DNA repair. It may act with RecF and RecO. This Ureaplasma urealyticum serovar 10 (strain ATCC 33699 / Western) protein is Recombination protein RecR.